A 455-amino-acid polypeptide reads, in one-letter code: Ribosomal protein uS12 methylthiotransferase RimO (455 aa).

The MTTase N-terminal domain maps to 10–120 (PKVGMVSLGC…VVEAVHDAAP (111 aa)). [4Fe-4S] cluster-binding residues include cysteine 19, cysteine 55, cysteine 84, cysteine 151, cysteine 155, and cysteine 158. The Radical SAM core domain occupies 137–380 (LTPRHYSYLK…MAKTAAISAA (244 aa)). The TRAM domain maps to 383-455 (EAKIGRTLPV…DEHDLFGVVT (73 aa)).

This sequence belongs to the methylthiotransferase family. RimO subfamily. Requires [4Fe-4S] cluster as cofactor.

The protein localises to the cytoplasm. It carries out the reaction L-aspartate(89)-[ribosomal protein uS12]-hydrogen + (sulfur carrier)-SH + AH2 + 2 S-adenosyl-L-methionine = 3-methylsulfanyl-L-aspartate(89)-[ribosomal protein uS12]-hydrogen + (sulfur carrier)-H + 5'-deoxyadenosine + L-methionine + A + S-adenosyl-L-homocysteine + 2 H(+). Its function is as follows. Catalyzes the methylthiolation of an aspartic acid residue of ribosomal protein uS12. This chain is Ribosomal protein uS12 methylthiotransferase RimO, found in Sphingopyxis alaskensis (strain DSM 13593 / LMG 18877 / RB2256) (Sphingomonas alaskensis).